A 567-amino-acid polypeptide reads, in one-letter code: MTEISRQAYADMFGPTTGDRVRLADTELWIEVENDLTAYGEEVKFGGGKVIRDGMGQGQMRARACVDLVITNALIVDHWGIVKADIGIKDGRIFAIGKAGNPDIQPNVTIPIGVGTEAIAGEGKIVTAGGVDTHIHWICPQQAEEALVSGVTTMIGGGTGPAAGTNATTCTPGPWYIARMLQAADSLPVNIGFLGKGNGSNPDALREQIAAGAIGLKIHEDWGATPAAIDCALTVAEEMDIQVALHSDTLNESGFVEDTLAAIGDRTIHTFHTEGAGGGHAPDIITACAHPHILPSSTNPTLPYTVNTIDEHLDMLMVCHHLDPDIAEDVAFAESRIRRETIAAEDVLHDLGAFSLTSSDSQAMGRVGEVILRTWQVAHRMKVQRGPLAEETGDNDNQRVKRYIAKYTINPALTHGIAHEVGSVEAGKLADLVLWSPAFFGVKPATLIKGGMIVCAPMGDINASIPTPQPVHYRPMFGALGAARHHCRLTFLSQAAVENGIAQQLNLRSATAVVKGCRTVKKADMIHNSLQPNITVDAQTYEVRIDGEPITSEPADVLPMAQRYFLF.

Positions 129-567 (GGVDTHIHWI…LPMAQRYFLF (439 aa)) constitute a Urease domain. Positions 134, 136, and 217 each coordinate Ni(2+). Position 217 is an N6-carboxylysine (Lys217). His219 contributes to the substrate binding site. Ni(2+)-binding residues include His246 and His272. His320 (proton donor) is an active-site residue. Asp360 is a binding site for Ni(2+).

It belongs to the metallo-dependent hydrolases superfamily. Urease alpha subunit family. As to quaternary structure, heterotrimer of UreA (gamma), UreB (beta) and UreC (alpha) subunits. Three heterotrimers associate to form the active enzyme. Requires Ni cation as cofactor. Carboxylation allows a single lysine to coordinate two nickel ions.

It localises to the cytoplasm. It carries out the reaction urea + 2 H2O + H(+) = hydrogencarbonate + 2 NH4(+). It functions in the pathway nitrogen metabolism; urea degradation; CO(2) and NH(3) from urea (urease route): step 1/1. This chain is Urease subunit alpha, found in Citrobacter koseri (strain ATCC BAA-895 / CDC 4225-83 / SGSC4696).